Consider the following 316-residue polypeptide: Annexin A13 (316 aa).

G2 carries N-myristoyl glycine lipidation. Annexin repeat units lie at residues 14–85, 86–157, 169–241, and 245–316; these read FDVD…ALLD, RPSE…SLLQ, DLAG…TLVR, and DQEG…ALLH.

This sequence belongs to the annexin family. In terms of assembly, monomer and homodimer. Detected in intestine, and at much lower levels also in kidney (at protein level).

The protein localises to the apical cell membrane. The protein resides in the cell membrane. It is found in the cytoplasmic vesicle. In terms of biological role, binds to membranes enriched in phosphatidylserine or phosphatidylglycerol in a calcium-dependent manner. Half-maximal membrane binding requires about 60 uM calcium. Does not bind to membranes that lack phospholipids with an acidic headgroup. Binds to membranes enriched in phosphatidylserine or phosphatidylglycerol in a calcium-dependent manner, but requires higher calcium levels for membrane binding than isoform A. Half-maximal membrane binding requires about 320 uM calcium. May play a role in vesicular traffic to the apical plasma membrane. The protein is Annexin A13 (ANXA13) of Canis lupus familiaris (Dog).